A 409-amino-acid polypeptide reads, in one-letter code: Glycogenin (409 aa).

Leucine 8, tyrosine 14, and arginine 80 together coordinate UDP. Leucine 8, tyrosine 14, arginine 80, lysine 89, aspartate 105, aspartate 107, asparagine 140, serine 141, aspartate 169, aspartate 172, and glutamine 173 together coordinate UDP-alpha-D-glucose. The UDP site is built by aspartate 105 and aspartate 107. 2 residues coordinate Mn(2+): aspartate 105 and aspartate 107. O-linked (Glc...) tyrosine glycosylation is present at tyrosine 212. Residues histidine 229, glycine 232, and lysine 235 each coordinate UDP. Histidine 229 provides a ligand contact to Mn(2+). UDP-alpha-D-glucose-binding residues include glycine 232 and lysine 235. The segment at 283 to 303 is disordered; sequence RIEEDSHETEEKVDEEVSISE.

It belongs to the glycosyltransferase 8 family. Glycogenin subfamily. Requires Mn(2+) as cofactor.

It localises to the cytoplasm. The protein resides in the vacuole. The catalysed reaction is L-tyrosyl-[glycogenin] + UDP-alpha-D-glucose = alpha-D-glucosyl-L-tyrosyl-[glycogenin] + UDP + H(+). It carries out the reaction [1,4-alpha-D-glucosyl](n)-L-tyrosyl-[glycogenin] + UDP-alpha-D-glucose = [1,4-alpha-D-glucosyl](n+1)-L-tyrosyl-[glycogenin] + UDP + H(+). In terms of biological role, glycogenin participates in the glycogen biosynthetic process along with glycogen synthase and glycogen branching enzyme. It catalyzes the formation of a short alpha (1,4)-glucosyl chain covalently attached via a glucose 1-O-tyrosyl linkage to internal tyrosine residues and these chains act as primers for the elongation reaction catalyzed by glycogen synthase. In Komagataella phaffii (strain GS115 / ATCC 20864) (Yeast), this protein is Glycogenin.